Consider the following 353-residue polypeptide: Photosystem II D2 protein (353 aa).

Thr-2 carries the post-translational modification N-acetylthreonine. Thr-2 carries the post-translational modification Phosphothreonine. Residues Cys-41 to Thr-61 traverse the membrane as a helical segment. His-118 serves as a coordination point for chlorophyll a. Residues Gly-125 to Pro-141 traverse the membrane as a helical segment. Pheophytin a is bound by residues Gln-130 and Asn-143. The helical transmembrane segment at Val-153–Ser-166 threads the bilayer. His-198 is a binding site for chlorophyll a. A helical transmembrane segment spans residues Ala-208–Asp-228. Positions 215 and 262 each coordinate a plastoquinone. His-215 lines the Fe cation pocket. Position 269 (His-269) interacts with Fe cation. A helical transmembrane segment spans residues Gly-279–Arg-295.

It belongs to the reaction center PufL/M/PsbA/D family. PSII is composed of 1 copy each of membrane proteins PsbA, PsbB, PsbC, PsbD, PsbE, PsbF, PsbH, PsbI, PsbJ, PsbK, PsbL, PsbM, PsbT, PsbX, PsbY, PsbZ, Psb30/Ycf12, at least 3 peripheral proteins of the oxygen-evolving complex and a large number of cofactors. It forms dimeric complexes. Requires The D1/D2 heterodimer binds P680, chlorophylls that are the primary electron donor of PSII, and subsequent electron acceptors. It shares a non-heme iron and each subunit binds pheophytin, quinone, additional chlorophylls, carotenoids and lipids. There is also a Cl(-1) ion associated with D1 and D2, which is required for oxygen evolution. The PSII complex binds additional chlorophylls, carotenoids and specific lipids. as cofactor.

The protein resides in the plastid. Its subcellular location is the chloroplast thylakoid membrane. The catalysed reaction is 2 a plastoquinone + 4 hnu + 2 H2O = 2 a plastoquinol + O2. Its function is as follows. Photosystem II (PSII) is a light-driven water:plastoquinone oxidoreductase that uses light energy to abstract electrons from H(2)O, generating O(2) and a proton gradient subsequently used for ATP formation. It consists of a core antenna complex that captures photons, and an electron transfer chain that converts photonic excitation into a charge separation. The D1/D2 (PsbA/PsbD) reaction center heterodimer binds P680, the primary electron donor of PSII as well as several subsequent electron acceptors. D2 is needed for assembly of a stable PSII complex. This Citrus sinensis (Sweet orange) protein is Photosystem II D2 protein.